Consider the following 430-residue polypeptide: Divergent protein kinase domain 2A (430 aa).

Positions 1–35 are cleaved as a signal peptide; sequence MWRLVPPKLGRLSRSLKLAALGSLLVLMVLHSPSL.

This sequence belongs to the DIPK family.

It localises to the cytoplasmic vesicle. The protein localises to the COPI-coated vesicle. It is found in the golgi apparatus. Its subcellular location is the secreted. May play a role in cardiomyocyte proliferation through paracrine signaling and activation of the PPI3K-AKT-CDK7 signaling cascade. This is Divergent protein kinase domain 2A from Homo sapiens (Human).